The following is a 186-amino-acid chain: MKVLHLDSGIFLEQSVSRQVSQNIVNKLKEKQDITLFHRDLVANPVPHLAADELLAEEKPLIDELVQELLDADTLVIGAPMYNFTIPTQLKAWFDRVLQAGVTFKYTEQGPQGLVNGKKVYIASGRGGIYSQGEAQAMDHQESYLKQVLAFIGITDVTIIRAEGMNMGDEPRQQGFKEAEQEIETI.

FMN is bound by residues 15-17 (SVS) and 81-84 (MYNF).

Belongs to the azoreductase type 1 family. Homodimer. FMN serves as cofactor.

The enzyme catalyses 2 a quinone + NADH + H(+) = 2 a 1,4-benzosemiquinone + NAD(+). It catalyses the reaction N,N-dimethyl-1,4-phenylenediamine + anthranilate + 2 NAD(+) = 2-(4-dimethylaminophenyl)diazenylbenzoate + 2 NADH + 2 H(+). In terms of biological role, quinone reductase that provides resistance to thiol-specific stress caused by electrophilic quinones. Also exhibits azoreductase activity. Catalyzes the reductive cleavage of the azo bond in aromatic azo compounds to the corresponding amines. This is FMN-dependent NADH:quinone oxidoreductase 1 from Idiomarina loihiensis (strain ATCC BAA-735 / DSM 15497 / L2-TR).